A 226-amino-acid chain; its full sequence is Oxaloacetate tautomerase FAHD2, mitochondrial (226 aa).

A mitochondrion-targeting transit peptide spans 1 to 30 (MAAAAQRLLAASTKIVGVGRNFVAHAKELG). Residues E69, E71, and D100 each coordinate Mg(2+).

The protein belongs to the FAH family. Mg(2+) serves as cofactor. Requires Mn(2+) as cofactor.

The protein resides in the mitochondrion. It carries out the reaction oxaloacetate = enol-oxaloacetate. Tautomerase that converts enol-oxaloacetate, a strong inhibitor of succinate dehydrogenase, to the physiological keto form of oxaloacetate. The polypeptide is Oxaloacetate tautomerase FAHD2, mitochondrial (Oryza sativa subsp. japonica (Rice)).